The following is a 244-amino-acid chain: MNQVKTNITRNFPHISRVMIWDLDGTIINSFHRVAPCFDSEGNLDLNKYKNEACKHDLIMQDTLLPLVTYMRQCMNDANTLNIICTARLMSKSDYYYLRKQGLRGRGDSNIRVFSRDTLHKYFEADKVSEIYHSKDAVYKSYYFGLFKQLYPNADFTMIDDHKGVLSAAASYGFKTLDAQAVNDILSIGVTLIGETFIDESLEDDNDYQFLADRLQLCWEGMTEEERAEYSCSPQQYIEKLKVA.

The catalysed reaction is a 2'-deoxyribonucleoside 5'-phosphate + H2O = a 2'-deoxyribonucleoside + phosphate. Functionally, following host DNA degradation, is responsible for the degradation of 5'-dNMP's to deoxynucleosides that can be further excreted. Active on deoxynucleoside 5'-monophosphates but not active as a phosphatase on ribonucleotides, deoxynucleoside 5'-triphosphates, deoxynucleoside 3'-monophosphates, or deoxyoligonucleotides. This chain is 5'-deoxynucleotidase (dmp), found in Escherichia coli (Enterobacteria phage T5).